We begin with the raw amino-acid sequence, 232 residues long: ATP-dependent Clp protease proteolytic subunit 2 (232 aa).

Serine 124 (nucleophile) is an active-site residue. The active site involves histidine 149.

Belongs to the peptidase S14 family. In terms of assembly, fourteen ClpP subunits assemble into 2 heptameric rings which stack back to back to give a disk-like structure with a central cavity, resembling the structure of eukaryotic proteasomes.

The protein localises to the cytoplasm. It catalyses the reaction Hydrolysis of proteins to small peptides in the presence of ATP and magnesium. alpha-casein is the usual test substrate. In the absence of ATP, only oligopeptides shorter than five residues are hydrolyzed (such as succinyl-Leu-Tyr-|-NHMec, and Leu-Tyr-Leu-|-Tyr-Trp, in which cleavage of the -Tyr-|-Leu- and -Tyr-|-Trp bonds also occurs).. Its function is as follows. Cleaves peptides in various proteins in a process that requires ATP hydrolysis. Has a chymotrypsin-like activity. Plays a major role in the degradation of misfolded proteins. The sequence is that of ATP-dependent Clp protease proteolytic subunit 2 from Nostoc sp. (strain PCC 7120 / SAG 25.82 / UTEX 2576).